We begin with the raw amino-acid sequence, 246 residues long: ATP synthase subunit a (246 aa).

Positions 1-3 (MFY) are cleaved as a propeptide — removed in mature form. 7 helical membrane passes run 21-41 (LTFSITNYTLYLIIVSLIIIF), 56-76 (WGVSVIAIYDTILNLVNGQIG), 82-102 (YFPLIFTIFNFILIANLISMI), 113-133 (VAVVSFSLTLWIGNVVLGLYL), 138-158 (FFALFVPSGTPLALVPVLVLI), 184-204 (LMLILGSLIISLMSSSFLGFV), and 206-226 (GIIPILAVVAITILEFGIAII).

The protein belongs to the ATPase A chain family. In terms of assembly, F-type ATPases have 2 components, CF(1) - the catalytic core - and CF(0) - the membrane proton channel. CF(1) has five subunits: alpha(3), beta(3), gamma(1), delta(1), epsilon(1). CF(0) has three main subunits: a, b and c.

The protein resides in the mitochondrion inner membrane. Its function is as follows. Mitochondrial membrane ATP synthase (F(1)F(0) ATP synthase or Complex V) produces ATP from ADP in the presence of a proton gradient across the membrane which is generated by electron transport complexes of the respiratory chain. F-type ATPases consist of two structural domains, F(1) - containing the extramembraneous catalytic core and F(0) - containing the membrane proton channel, linked together by a central stalk and a peripheral stalk. During catalysis, ATP synthesis in the catalytic domain of F(1) is coupled via a rotary mechanism of the central stalk subunits to proton translocation. Key component of the proton channel; it may play a direct role in the translocation of protons across the membrane. The sequence is that of ATP synthase subunit a (ATP6) from Candida parapsilosis (Yeast).